A 734-amino-acid chain; its full sequence is Ribosomal biogenesis protein LAS1L (734 aa).

The disordered stretch occupies residues 204–255 (EGIEEEDQEEDKNIVVDDITEQKPEPQDDGKSTESDVKADGDSKGSEEVDSH). Residues 214-255 (DKNIVVDDITEQKPEPQDDGKSTESDVKADGDSKGSEEVDSH) show a composition bias toward basic and acidic residues. Residues lysine 215 and lysine 226 each participate in a glycyl lysine isopeptide (Lys-Gly) (interchain with G-Cter in SUMO2) cross-link. Residues serine 441, serine 523, and serine 560 each carry the phosphoserine modification. A compositionally biased stretch (polar residues) spans 547–561 (GSEAKAQQQEEQGSV). A disordered region spans residues 547–619 (GSEAKAQQQE…PFSTGQESPT (73 aa)). Residues 563-575 (DVKEEEKEEKEVL) are compositionally biased toward basic and acidic residues. Acidic residues predominate over residues 578–605 (QVEEEEENDDQEEEEEDEDDEDDEEEDR). The residue at position 617 (serine 617) is a Phosphoserine. The segment at 636–655 (SAWQVSSEDVRWDTFPLGRM) is interaction with NOL9.

Belongs to the LAS1 family. In terms of assembly, component of some MLL1/MLL complex, at least composed of the core components KMT2A/MLL1, ASH2L, HCFC1/HCF1, WDR5 and RBBP5, as well as the facultative components BACC1, CHD8, E2F6, HSP70, INO80C, KANSL1, LAS1L, MAX, MCRS1, MGA, KAT8/MOF, PELP1, PHF20, PRP31, RING2, RUVB1/TIP49A, RUVB2/TIP49B, SENP3, TAF1, TAF4, TAF6, TAF7, TAF9 and TEX10. Component of the 5FMC complex, at least composed of PELP1, LAS1L, TEX10, WDR18 and SENP3; the complex interacts with methylated CHTOP and ZNF148. Interacts with NOL9 to form an ITS2 pre-rRNA endonuclease-kinase complex.

The protein localises to the nucleus. The protein resides in the nucleolus. Its subcellular location is the nucleoplasm. It is found in the cytoplasm. Its function is as follows. Required for the synthesis of the 60S ribosomal subunit and maturation of the 28S rRNA. Functions as a component of the Five Friends of Methylated CHTOP (5FMC) complex; the 5FMC complex is recruited to ZNF148 by methylated CHTOP, leading to desumoylation of ZNF148 and subsequent transactivation of ZNF148 target genes. Required for the efficient pre-rRNA processing at both ends of internal transcribed spacer 2 (ITS2). In Homo sapiens (Human), this protein is Ribosomal biogenesis protein LAS1L (LAS1L).